Here is a 473-residue protein sequence, read N- to C-terminus: Ribulose bisphosphate carboxylase large chain (473 aa).

Residues 1–2 constitute a propeptide that is removed on maturation; that stretch reads MS. At P3 the chain carries N-acetylproline. K14 is subject to N6,N6,N6-trimethyllysine. 2 residues coordinate substrate: N123 and T173. K175 acts as the Proton acceptor in catalysis. A substrate-binding site is contributed by K177. Residues K201, D203, and E204 each coordinate Mg(2+). K201 is subject to N6-carboxylysine. Residue H294 is the Proton acceptor of the active site. R295, H327, and S379 together coordinate substrate.

Belongs to the RuBisCO large chain family. Type I subfamily. As to quaternary structure, heterohexadecamer of 8 large chains and 8 small chains; disulfide-linked. The disulfide link is formed within the large subunit homodimers. The cofactor is Mg(2+). Post-translationally, the disulfide bond which can form in the large chain dimeric partners within the hexadecamer appears to be associated with oxidative stress and protein turnover.

The protein localises to the plastid. Its subcellular location is the chloroplast. The enzyme catalyses 2 (2R)-3-phosphoglycerate + 2 H(+) = D-ribulose 1,5-bisphosphate + CO2 + H2O. It carries out the reaction D-ribulose 1,5-bisphosphate + O2 = 2-phosphoglycolate + (2R)-3-phosphoglycerate + 2 H(+). Its function is as follows. RuBisCO catalyzes two reactions: the carboxylation of D-ribulose 1,5-bisphosphate, the primary event in carbon dioxide fixation, as well as the oxidative fragmentation of the pentose substrate in the photorespiration process. Both reactions occur simultaneously and in competition at the same active site. The polypeptide is Ribulose bisphosphate carboxylase large chain (Cajanus cajan (Pigeon pea)).